Consider the following 265-residue polypeptide: 4-hydroxy-tetrahydrodipicolinate reductase (265 aa).

NAD(+) contacts are provided by residues 7–12 (GASGRM) and Asp33. Residue Arg34 participates in NADP(+) binding. NAD(+) contacts are provided by residues 96 to 98 (GTT) and 120 to 123 (AANM). His153 (proton donor/acceptor) is an active-site residue. A (S)-2,3,4,5-tetrahydrodipicolinate-binding site is contributed by His154. The active-site Proton donor is the Lys157. 163–164 (GT) is a binding site for (S)-2,3,4,5-tetrahydrodipicolinate.

The protein belongs to the DapB family.

It is found in the cytoplasm. The catalysed reaction is (S)-2,3,4,5-tetrahydrodipicolinate + NAD(+) + H2O = (2S,4S)-4-hydroxy-2,3,4,5-tetrahydrodipicolinate + NADH + H(+). It catalyses the reaction (S)-2,3,4,5-tetrahydrodipicolinate + NADP(+) + H2O = (2S,4S)-4-hydroxy-2,3,4,5-tetrahydrodipicolinate + NADPH + H(+). The protein operates within amino-acid biosynthesis; L-lysine biosynthesis via DAP pathway; (S)-tetrahydrodipicolinate from L-aspartate: step 4/4. Catalyzes the conversion of 4-hydroxy-tetrahydrodipicolinate (HTPA) to tetrahydrodipicolinate. This is 4-hydroxy-tetrahydrodipicolinate reductase from Burkholderia lata (strain ATCC 17760 / DSM 23089 / LMG 22485 / NCIMB 9086 / R18194 / 383).